The sequence spans 545 residues: MAELTISSDEIRSAIESYTQSYTPETSIEEVGVVTDTSDGIAHVSGLPSAMANELLEFPGGVLGVALNLEDREIGAVILGEFAEIEEGQQVRRTGDVLSVPVGDKFLGRVVNPLGQPIDGLGEIEAEEQRVLELQAATVLQRQPVEEPLATGITAIDALTAIGRGQRQLIIGDRKTGKTAVCIDAILNQKANWETGDPTKQVRCIYVAIGQKGSTIAGVKAALEEHGALEYTTIVAAPASDSAGFKWLAPYTGSAIGQHWMYQGKHVLIVFDDLTKQAEAYRAISLLLRRPPGREAYPGDVFYLHSRLLERCAKLSDEMGGGSMTGLPIIETKANDISAFIPTNVISITDGQVFLESDLFNKGVRPAINVGTSVSRVGGAAQTKGMKKVAGSLRLEMAQYRELEAFSAFASDLDAASLAQLERGARWVELLKQDQYSPVPVEDQIVSIFLVDQGYYDSVPVGDIRRFNAELLEDLHRSAADAFKSIEGGKVLEGEAAEAIKAATDKFKQGFLASDGSRVVNEAAAGELGHEEVESLSVTRKHVEK.

Residue 172–179 (GDRKTGKT) participates in ATP binding.

It belongs to the ATPase alpha/beta chains family. As to quaternary structure, F-type ATPases have 2 components, CF(1) - the catalytic core - and CF(0) - the membrane proton channel. CF(1) has five subunits: alpha(3), beta(3), gamma(1), delta(1), epsilon(1). CF(0) has three main subunits: a(1), b(2) and c(9-12). The alpha and beta chains form an alternating ring which encloses part of the gamma chain. CF(1) is attached to CF(0) by a central stalk formed by the gamma and epsilon chains, while a peripheral stalk is formed by the delta and b chains.

It localises to the cell membrane. The enzyme catalyses ATP + H2O + 4 H(+)(in) = ADP + phosphate + 5 H(+)(out). Functionally, produces ATP from ADP in the presence of a proton gradient across the membrane. The alpha chain is a regulatory subunit. The protein is ATP synthase subunit alpha of Nocardia farcinica (strain IFM 10152).